Here is a 196-residue protein sequence, read N- to C-terminus: Phosphoheptose isomerase (196 aa).

One can recognise an SIS domain in the interval 34-196 (MVQCLLGGKK…DRTLFPQDEA (163 aa)). A substrate-binding site is contributed by 49-51 (NGG). Residues His58 and Glu62 each contribute to the Zn(2+) site. Substrate-binding positions include Glu62, 91–92 (ND), 117–119 (STS), Ser122, and Gln172. Zn(2+) contacts are provided by Gln172 and His180.

Belongs to the SIS family. GmhA subfamily. As to quaternary structure, homotetramer. It depends on Zn(2+) as a cofactor.

It localises to the cytoplasm. The enzyme catalyses 2 D-sedoheptulose 7-phosphate = D-glycero-alpha-D-manno-heptose 7-phosphate + D-glycero-beta-D-manno-heptose 7-phosphate. It functions in the pathway carbohydrate biosynthesis; D-glycero-D-manno-heptose 7-phosphate biosynthesis; D-glycero-alpha-D-manno-heptose 7-phosphate and D-glycero-beta-D-manno-heptose 7-phosphate from sedoheptulose 7-phosphate: step 1/1. Functionally, catalyzes the isomerization of sedoheptulose 7-phosphate in D-glycero-D-manno-heptose 7-phosphate. The sequence is that of Phosphoheptose isomerase from Shewanella denitrificans (strain OS217 / ATCC BAA-1090 / DSM 15013).